We begin with the raw amino-acid sequence, 367 residues long: Phosphoribosylaminoimidazole-succinocarboxamide synthase (367 aa).

The protein belongs to the SAICAR synthetase family.

The catalysed reaction is 5-amino-1-(5-phospho-D-ribosyl)imidazole-4-carboxylate + L-aspartate + ATP = (2S)-2-[5-amino-1-(5-phospho-beta-D-ribosyl)imidazole-4-carboxamido]succinate + ADP + phosphate + 2 H(+). It functions in the pathway purine metabolism; IMP biosynthesis via de novo pathway; 5-amino-1-(5-phospho-D-ribosyl)imidazole-4-carboxamide from 5-amino-1-(5-phospho-D-ribosyl)imidazole-4-carboxylate: step 1/2. The chain is Phosphoribosylaminoimidazole-succinocarboxamide synthase from Colwellia psychrerythraea (strain 34H / ATCC BAA-681) (Vibrio psychroerythus).